A 125-amino-acid polypeptide reads, in one-letter code: Large ribosomal subunit protein bL12 (125 aa).

It belongs to the bacterial ribosomal protein bL12 family. In terms of assembly, homodimer. Part of the ribosomal stalk of the 50S ribosomal subunit. Forms a multimeric L10(L12)X complex, where L10 forms an elongated spine to which 2 to 4 L12 dimers bind in a sequential fashion. Binds GTP-bound translation factors.

Its function is as follows. Forms part of the ribosomal stalk which helps the ribosome interact with GTP-bound translation factors. Is thus essential for accurate translation. The polypeptide is Large ribosomal subunit protein bL12 (Hyphomonas neptunium (strain ATCC 15444)).